We begin with the raw amino-acid sequence, 142 residues long: Type 3 secretion system pilotin (142 aa).

Positions 1–23 are cleaved as a signal peptide; it reads MIRHGSNKLKIFILSILLLTLSG. The N-palmitoyl cysteine moiety is linked to residue Cys24. The S-diacylglycerol cysteine moiety is linked to residue Cys24.

Belongs to the MxiM family. Monomer. Interacts with the secretin MxiD/SctC.

It is found in the cell outer membrane. Functionally, involved in the synthesis of the type III secretion system (T3SS), also called injectisome, which is used to inject bacterial effector proteins into eukaryotic host cells. Pilot protein that is required for the proper localization of the secretin MxiD/SctC in the outer membrane. Also influences both MxiD/SctC multimerization and stability. Required for both Ipa translocation and tissue culture cell invasion. Binds lipids. This is Type 3 secretion system pilotin from Shigella flexneri.